We begin with the raw amino-acid sequence, 476 residues long: Monodehydroascorbate reductase 2, peroxisomal (476 aa).

Residues 1 to 3 (MGR) are Cytoplasmic-facing. The chain crosses the membrane as a helical span at residues 4–24 (AFVHVILGGGVAAGYAALEFA). FAD-binding positions include 12–15 (GGVA), Glu-40, Arg-47, Lys-52, and 146–147 (RN). The Peroxisomal portion of the chain corresponds to 25–447 (RRGGYSRGEL…GGLALGEKPT (423 aa)). Residues 171–177 (GGYIGME), Glu-195, Arg-201, and Gly-260 each bind NAD(+). 173 to 177 (YIGME) lines the NADP(+) pocket. 2 residues coordinate NADP(+): Arg-201 and Gly-260. FAD is bound at residue Asp-297. Residue 314 to 315 (EH) participates in NAD(+) binding. An NADP(+)-binding site is contributed by 314–315 (EH). Val-316 is an FAD binding site. Residue Arg-320 coordinates L-ascorbate. Tyr-346 contributes to the FAD binding site. Tyr-346 contributes to the NAD(+) binding site. Tyr-346 lines the NADP(+) pocket. Residue Arg-348 participates in L-ascorbate binding. The chain crosses the membrane as a helical span at residues 448 to 468 (YVWHATAGVIAAASIAAFGYW). Over 469 to 476 (YGRKRRRW) the chain is Cytoplasmic.

The protein belongs to the FAD-dependent oxidoreductase family. It depends on FAD as a cofactor.

It localises to the peroxisome membrane. The enzyme catalyses 2 monodehydro-L-ascorbate radical + NADH + H(+) = 2 L-ascorbate + NAD(+). Its function is as follows. Catalyzes the conversion of monodehydroascorbate to ascorbate, oxidizing NADH in the process. Ascorbate is a major antioxidant against reactive oxygen species (ROS) and nitric oxide (NO). The protein is Monodehydroascorbate reductase 2, peroxisomal of Oryza sativa subsp. japonica (Rice).